A 119-amino-acid polypeptide reads, in one-letter code: Large ribosomal subunit protein bL20c (119 aa).

Belongs to the bacterial ribosomal protein bL20 family.

It is found in the plastid. The protein localises to the chloroplast. Binds directly to 23S ribosomal RNA and is necessary for the in vitro assembly process of the 50S ribosomal subunit. It is not involved in the protein synthesizing functions of that subunit. The chain is Large ribosomal subunit protein bL20c from Lolium perenne (Perennial ryegrass).